The primary structure comprises 176 residues: Small ribosomal subunit protein uS8c (176 aa).

Belongs to the universal ribosomal protein uS8 family. In terms of assembly, part of the 30S ribosomal subunit.

The protein localises to the plastid. It is found in the chloroplast. Functionally, one of the primary rRNA binding proteins, it binds directly to 16S rRNA central domain where it helps coordinate assembly of the platform of the 30S subunit. The protein is Small ribosomal subunit protein uS8c (rps8) of Stigeoclonium helveticum (Green alga).